The following is a 609-amino-acid chain: MESTAYPLNLSLKEEEEEEEIQSRELEDGPADMQKVRICSEGGWVPALFDEVAIYFSDEEWEVLTEQQKALYREVMRMNYETVLSLEFPFPKPDMITRLEGEEESQNSDEWQLQGGTSAENEESDVKPPDWPNPMNATSQFPQPQHFDSFGLRLPRDITELPEWSEGYPFYMAMGFPGYDLSADDIAGKFQFSRGMRRSYDAGFKLMVVEYAESTNNCQAAKQFGVLEKNVRDWRKVKPQLQNAHAMRRAFRGPKNGRFALVDQRVAEYVRYMQAKGDPITREAMQLKALEIAQEMNIPEKGFKASLGWCRRMMRRYDLSLRHKVPVPQHLPEDLTEKLVTYQRSVLALRRAHDYEVAQMGNADETPICLEVPSRVTVDNQGEKPVLVKTPGREKLKITAMLGVLADGRKLPPYIILRGTYIPPGKFPSGMEIRCHRYGWMTEDLMQDWLEVVWRRRTGAVPKQRGMLILNGFRGHATDSVKNSMESMNTDMVIIPGGLTSQLQVLDVVVYKPLNDSVRAQYSNWLLAGNLALSPTGNAKKPPLGLFLEWVMVAWNSISSESIVQGFKKCHISSNLEEEDDVLWEIESELPGGGEPPKDCDTESMAESN.

Disordered regions lie at residues 1 to 28 and 100 to 127; these read MESTAYPLNLSLKEEEEEEEIQSRELED and EGEEESQNSDEWQLQGGTSAENEESDVK. A coiled-coil region spans residues 8–28; the sequence is LNLSLKEEEEEEEIQSRELED. A Glycyl lysine isopeptide (Lys-Gly) (interchain with G-Cter in SUMO2) cross-link involves residue K13. One can recognise a KRAB domain in the interval 47–118; the sequence is ALFDEVAIYF…DEWQLQGGTS (72 aa). The segment covering 108–119 has biased composition (polar residues); the sequence is SDEWQLQGGTSA. The 74-residue stretch at 250–323 folds into the HTH CENPB-type domain; the sequence is AFRGPKNGRF…MRRYDLSLRH (74 aa). The DDE-1 domain occupies 353 to 567; the sequence is HDYEVAQMGN…ISSESIVQGF (215 aa). A Glycyl lysine isopeptide (Lys-Gly) (interchain with G-Cter in SUMO2) cross-link involves residue K384. The segment at 588 to 609 is disordered; it reads SELPGGGEPPKDCDTESMAESN.

Its subcellular location is the nucleus. In Homo sapiens (Human), this protein is Pogo transposable element with KRAB domain (POGK).